The following is an 837-amino-acid chain: MVSPGQNDLSSDKSQIDPFVKKQNAKLTQVIQNFFSKSVQIVLQSRIQSESHNKEEQLKVGGDVGGHNVSSKINKWFNLHMYNDNLPKEELKLWKNINDVSQMPPMIIEVYLDLRQLTAIQTVILRDDNGNPWTVAKGGSKKHEVVLERWLIEFDANTVSGTIVDELPLIYKQAIILFRSLYGYTRLMPTFKLKKNLNKSNLNIGCKILDGKQPISSKGRIGLSKSIIPHQMLTTESHMSHKHFLPIQTTLGTLKISIAYRNHHEFSIHDNEELLSTHFVNIDDNDKDSEITPVEIEFKEELKIDRDSTTNEKVNEPEDDESHHADVESSQEHLQSEEPDESFEQDAKHISGSRKKFSISNNASMSLSPCSSGPQTVTEDSPSHNKPSANTTPIVSQRPTINPFKVGSISTSPPATTNFGGSSLERKVSITSNKSASNASLAAMLRNPRSSTSSTNTTANIPIANNNSNNQYNSTFPRSVSSSHGSNLAHDNDNLLGFSNPDNTSNTPRFSSSFGSRASRRFSNTSGRQSSLPSGNMNDTSLLATSAGSASSDAPMSGLYIDDDIGDFVRMIDSKSDLRFSGYNSNNDSKISYNQGSNSQIDALNKFQMLKNQHQQLSDSVSASLILHHNQLSGSRPSSRKSSHSIHSPPPSLPSGSYDNSHLPSINSKLRENSSTSGNDDNLARDSGTPSSRKNSFDYSTNSNTTFLKSPITNKLVSSPVTSTTPIHSCLHKTNNESGVISGLATTPSIYNDRRQIHYESVFDDDDDDYANNTADNRDQDDSLKLYLTNKLANAPKSNTNSRSLKSSTNPPNIGEDDDDDDDDLLFTMSDMNLAKH.

Positions 302–336 (LKIDRDSTTNEKVNEPEDDESHHADVESSQEHLQS) are enriched in basic and acidic residues. 4 disordered regions span residues 302–400 (LKID…QRPT), 446–540 (RNPR…MNDT), 631–704 (QLSG…TNSN), and 793–837 (ANAP…LAKH). Residues 358–400 (SISNNASMSLSPCSSGPQTVTEDSPSHNKPSANTTPIVSQRPT) show a composition bias toward polar residues. The span at 450 to 475 (SSTSSTNTTANIPIANNNSNNQYNST) shows a compositional bias: low complexity. A compositionally biased stretch (polar residues) spans 476–486 (FPRSVSSSHGS). Residues 509-523 (RFSSSFGSRASRRFS) are compositionally biased toward low complexity. Polar residues-rich tracts occupy residues 524–538 (NTSG…GNMN), 658–680 (YDNS…SGND), 688–704 (GTPS…TNSN), and 796–812 (PKSN…TNPP). The span at 815–825 (GEDDDDDDDDL) shows a compositional bias: acidic residues.

Belongs to the ATG13 family. Fungi subfamily. As to quaternary structure, interacts with ATG1 to form the ATG1-ATG13 kinase complex.

It is found in the cytoplasm. Its subcellular location is the preautophagosomal structure. Functionally, activates the ATG1 kinase in a nutritional condition dependent manner through the TOR pathway, leading to autophagy. Also involved in cytoplasm to vacuole transport (Cvt) and more specifically in Cvt vesicle formation. Seems to play a role in the switching machinery regulating the conversion between the Cvt pathway and autophagy. Finally, ATG13 is also required for glycogen storage during stationary phase. The sequence is that of Autophagy-related protein 13 (ATG13) from Debaryomyces hansenii (strain ATCC 36239 / CBS 767 / BCRC 21394 / JCM 1990 / NBRC 0083 / IGC 2968) (Yeast).